We begin with the raw amino-acid sequence, 632 residues long: DNA mismatch repair protein MutL (632 aa).

The tract at residues 376-397 (EQPQAEPRQSFTPGSGAGSGYQ) is disordered.

Belongs to the DNA mismatch repair MutL/HexB family.

Its function is as follows. This protein is involved in the repair of mismatches in DNA. It is required for dam-dependent methyl-directed DNA mismatch repair. May act as a 'molecular matchmaker', a protein that promotes the formation of a stable complex between two or more DNA-binding proteins in an ATP-dependent manner without itself being part of a final effector complex. The protein is DNA mismatch repair protein MutL of Pseudomonas entomophila (strain L48).